Reading from the N-terminus, the 269-residue chain is tRNA pseudouridine synthase A (269 aa).

Asp55 serves as the catalytic Nucleophile. Tyr111 contacts substrate.

Belongs to the tRNA pseudouridine synthase TruA family.

The enzyme catalyses uridine(38/39/40) in tRNA = pseudouridine(38/39/40) in tRNA. In terms of biological role, formation of pseudouridine at positions 38, 39 and 40 in the anticodon stem and loop of transfer RNAs. This Methanosarcina mazei (strain ATCC BAA-159 / DSM 3647 / Goe1 / Go1 / JCM 11833 / OCM 88) (Methanosarcina frisia) protein is tRNA pseudouridine synthase A.